Reading from the N-terminus, the 459-residue chain is uncharacterized protein (459 aa).

The next 2 helical transmembrane spans lie at 53 to 75 (IPLL…GLTL) and 111 to 133 (ARIA…CLCA). Positions 174–196 (HLDNPSAPHPSENPQSRAHPKQN) are disordered.

Its subcellular location is the cell membrane. This is an uncharacterized protein from Treponema pallidum (strain Nichols).